Consider the following 149-residue polypeptide: Protein FAM72A (149 aa).

This sequence belongs to the FAM72 family. Interacts with UNG. Expressed at high levels in stomach and also in kidney and, at low levels, in heart (at protein level). In the stomach, highly expressed in foveolar cells, parietal cells and chief cells (at protein level). In kidney, expressed in endothelial cells, mesangial and epithelial cells (parietal and visceral epithelium) around glomerulus (at protein level).

Its subcellular location is the cytoplasm. The protein resides in the mitochondrion. Functionally, may play a role in the regulation of cellular reactive oxygen species metabolism. May participate in cell growth regulation. The polypeptide is Protein FAM72A (FAM72A) (Bos taurus (Bovine)).